Reading from the N-terminus, the 416-residue chain is Enterobactin exporter EntS (416 aa).

Over 1 to 21 (MNKQSWLLNLSLLKTHPAFRA) the chain is Cytoplasmic. Residues 22–42 (VFLARFISIVSLGLLGVAVPV) traverse the membrane as a helical segment. The Periplasmic portion of the chain corresponds to 43–55 (QIQIMTHSTWQVG). The chain crosses the membrane as a helical span at residues 56-76 (LSVTLTGGAMFVGLMVGGVLA). Over 77 to 83 (DRYERKK) the chain is Cytoplasmic. Residues 84-104 (VILLARGTCGIGFIGLCLNAL) form a helical membrane-spanning segment. Over 105-109 (LPEPS) the chain is Periplasmic. The chain crosses the membrane as a helical span at residues 110 to 130 (LLAIYLLGLWDGFFASLGVTA). The Cytoplasmic segment spans residues 131 to 156 (LLAATPALVGRENLMQAGAITMLTVR). The chain crosses the membrane as a helical span at residues 157-177 (LGSVISPMIGGLLLATGGVAW). A topological domain (periplasmic) is located at residue asparagine 178. The chain crosses the membrane as a helical span at residues 179–199 (YGLAAAGTFITLLPLLSLPAL). Residues 200 to 218 (PPPPQPREHPLKSLLAGFR) lie on the Cytoplasmic side of the membrane. The chain crosses the membrane as a helical span at residues 219 to 239 (FLLASPLVGGIALLGGLLTMA). Residues 240–256 (SAVRVLYPALADNWQMS) lie on the Periplasmic side of the membrane. The helical transmembrane segment at 257–277 (AAQIGFLYAAIPLGAAIGALT) threads the bilayer. The Cytoplasmic segment spans residues 278–287 (SGKLAHSVRP). Residues 288–307 (GLLMLLSTLGAFLAIGLFGL) traverse the membrane as a helical segment. Residues 308–313 (MPMWIL) lie on the Periplasmic side of the membrane. The chain crosses the membrane as a helical span at residues 314 to 336 (GVVCLALFGWLSAVSSLLQYTML). The Cytoplasmic segment spans residues 337–356 (QTQTPEAMLGRINGLWTAQN). Residues 357–377 (VTGDAIGAALLGGLGAMMTPV) form a helical membrane-spanning segment. Residue alanine 378 is a topological domain, periplasmic. Residues 379-399 (SASASGFGLLIIGVLLLLVLV) traverse the membrane as a helical segment. Residues 400 to 416 (ELRRFRQTPPQVTASDS) lie on the Cytoplasmic side of the membrane.

This sequence belongs to the major facilitator superfamily. EntS (TC 2.A.1.38) family.

The protein resides in the cell inner membrane. Functionally, component of an export pathway for enterobactin. The protein is Enterobactin exporter EntS of Escherichia coli O127:H6 (strain E2348/69 / EPEC).